The chain runs to 421 residues: UDP-N-acetylglucosamine 1-carboxyvinyltransferase (421 aa).

22–23 lines the phosphoenolpyruvate pocket; sequence KN. Residue Arg91 coordinates UDP-N-acetyl-alpha-D-glucosamine. Cys115 (proton donor) is an active-site residue. Cys115 is subject to 2-(S-cysteinyl)pyruvic acid O-phosphothioketal. Residues 120 to 124, Asp306, and Ile328 each bind UDP-N-acetyl-alpha-D-glucosamine; that span reads RPIDL.

Belongs to the EPSP synthase family. MurA subfamily.

Its subcellular location is the cytoplasm. It carries out the reaction phosphoenolpyruvate + UDP-N-acetyl-alpha-D-glucosamine = UDP-N-acetyl-3-O-(1-carboxyvinyl)-alpha-D-glucosamine + phosphate. It functions in the pathway cell wall biogenesis; peptidoglycan biosynthesis. Its function is as follows. Cell wall formation. Adds enolpyruvyl to UDP-N-acetylglucosamine. This is UDP-N-acetylglucosamine 1-carboxyvinyltransferase from Methylacidiphilum infernorum (isolate V4) (Methylokorus infernorum (strain V4)).